Here is a 1125-residue protein sequence, read N- to C-terminus: MASEEASLRALESLMTEFFHDCTTNERKREIEELLNNFAQQVGAWRFCLYFLSSTRNDYVMMYSLTVFENLINKMWLGVPSQDKMEIRSCLPKLLLAHHKTLPYFIRNKLCKVIVDIGRQDWPMFYHDFFTNILQLIQSPVTTPLGLIMLKTTSEELACPREDLSVARKEELRKLLLDQVQTVLGLLTGILETVWDKHSVTAATPPPSPTSGESGDLLSNLLQSPSSAKLLHQPIPILDVESEYVCSLALECLAHLFSWIPLSASITPSLLTTIFHFARFGCDTRARKMASVNGSSQNCVLGQERGRLGVLAMSCINELMSKNCVPMEFEEYLLRMFQQTFYLLQKITKDNNAHTVKSRLEELDESYIEKFTDFLRLFVSVHLRRIESYSQFPVVEFLTLLFKYTFHQPTHEGYFSCLDIWTLFLDYLTSKIKSRLGDKEAVLNRYEDALVLLLTEVLNRIQFRYNQAQLEELDDETLDDDQQTEWQRYLRQSLEVVAKVMELLPTHAFSTLFPVLQDNLEVYLGLQQFVVTSGSGHRLNITAENDCRRLHCSLRDLSSLLQAVGRLAEYFIGDVFAARFNDALTVVERLVKVTLYGSQIKLYNIETAVPSVLKPDLIDVHAQSLAALQAYSHWLAQYCGEAHRQNTQQFVTLISTTMDAITPLISTKVQDKLLLSACHLLVSLATTVRPVFLISIPAVQKVFNSIIDASAQRLTDKAQVLVCRALSNTLLLPWPNLPESEQQWPLRSINHASLISALSRDYHSLKPSATAPQRKVPLGDTKVIIHQTLSVLEDIVENISGESTKSRQICYQSLQESVQVSLALFPAFIHQSDVTDEMLSFFLTLFRGLRVQMGVPFTEQIIQTFLNMFTREQLAESILHEGSTGCRVVEKFLKILQVVVQEPGQVFKPFLPSIIALCMEQVYPIIAERPSPDVKAELFELLFRTLHHNWRYFFKSTVLASVQRGIAEEQMENEPQFSAIMQAFGQSFLQPDIHLFKQNLFYLETLNTKQKLYHKKIFRTTMLFQFVNVLLQVLVHKSHDLLQEEIGIAIYNMASVDFDGFFAAFLPEFLTSCDGVDANQKNVLGRNFKMDRDLPSFTQNVHRLVNDLRYYRLCNDSLPPGTVKL.

Residue Ala2 is modified to N-acetylalanine. An Importin N-terminal domain is found at Ile31–Ala97. Ser199 is modified (phosphoserine). Residues Thr201 and Thr204 each carry the phosphothreonine modification. A phosphoserine mark is found at Ser208 and Ser224.

Belongs to the exportin family. As to quaternary structure, found in a complex with XPO6, Ran, ACTB and PFN1. Interacts with ACTB. Interacts with ACTB in a RanGTP-dependent manner.

It is found in the nucleus. The protein localises to the cytoplasm. In terms of biological role, mediates the nuclear export of actin and profilin-actin complexes in somatic cells. This is Exportin-6 (Xpo6) from Mus musculus (Mouse).